The following is a 164-amino-acid chain: Transcription antitermination protein NusB (164 aa).

The interval Lys144–Ser164 is disordered. Over residues Leu149 to Ser164 the composition is skewed to basic and acidic residues.

The protein belongs to the NusB family.

Involved in transcription antitermination. Required for transcription of ribosomal RNA (rRNA) genes. Binds specifically to the boxA antiterminator sequence of the ribosomal RNA (rrn) operons. In Chlorobium phaeovibrioides (strain DSM 265 / 1930) (Prosthecochloris vibrioformis (strain DSM 265)), this protein is Transcription antitermination protein NusB.